A 580-amino-acid chain; its full sequence is Arginine--tRNA ligase (580 aa).

The 'HIGH' region signature appears at 127–137 (PNTHKELHVGH).

Belongs to the class-I aminoacyl-tRNA synthetase family. In terms of assembly, monomer.

It is found in the cytoplasm. The catalysed reaction is tRNA(Arg) + L-arginine + ATP = L-arginyl-tRNA(Arg) + AMP + diphosphate. The polypeptide is Arginine--tRNA ligase (Bdellovibrio bacteriovorus (strain ATCC 15356 / DSM 50701 / NCIMB 9529 / HD100)).